Consider the following 432-residue polypeptide: C(50) beta-cyclic carotenoids biosynthesis protein LbtBC (432 aa).

Residues 1 to 140 (MTSLYTTLNL…DDDEVRTPER (140 aa)) form a beta-cyclase region. 3 helical membrane-spanning segments follow: residues 4–24 (LYTT…LLAA), 36–56 (LIGV…FDNI), and 83–103 (FAYA…LTAS). The tract at residues 111-140 (GSPTVSGRGDALLTRAPEPGDDDEVRTPER) is disordered. The tract at residues 141–432 (PGTPGLLTTL…IVLWSVLVWS (292 aa)) is elongase/hydratase. 7 consecutive transmembrane segments (helical) span residues 170–190 (YFLA…FFLV), 252–272 (ESSL…AKGL), 277–297 (IPFL…IVGW), 299–319 (IAGA…MLWG), 350–370 (AAVW…LAAA), 374–394 (ASGA…YVGV), and 409–429 (FLVL…WSVL).

Belongs to the UbiA prenyltransferase family. May form a complex with LbtA.

It is found in the cell membrane. It catalyses the reaction all-trans-lycopene + dimethylallyl diphosphate + H2O = dihydroisopentenyldehydrorhodopin + diphosphate. The catalysed reaction is isopentenyldehydrorhodopin + dimethylallyl diphosphate + H2O = dihydrobisanhydrobacterioruberin + diphosphate. It participates in carotenoid biosynthesis. Involved in the biosynthesis of C(50) beta-cyclic carotenoids. The elongase/hydratase domain catalyzes the elongation of lycopene by attaching a C(5) isoprene unit at C-2, as well as the hydroxylation of the previous end of the molecule. The enzyme acts at both ends of the substrate, and catalyzes the conversion of lycopene to the C(45) intermediate dihydroisopentenyldehydrorhodopin (DH-IDR) and the conversion of isopentenyldehydrorhodopin (IDR) to the C(50) carotenoid dihydrobisanhydrobacterioruberin (DH-BABR). The beta-cyclase domain may produce the C(50) beta-cyclic carotenoid C.p.450 from the C(50) carotenoid dihydrobisanhydrobacterioruberin (DH-BABR). This chain is C(50) beta-cyclic carotenoids biosynthesis protein LbtBC, found in Dietzia sp. (strain CQ4).